We begin with the raw amino-acid sequence, 621 residues long: Putative acyltransferase plsB1 (621 aa).

Residues 123-128 carry the HXXXXD motif motif; that stretch reads HRSYLD.

This sequence belongs to the GPAT/DAPAT family.

It is found in the cell membrane. In Mycobacterium bovis (strain ATCC BAA-935 / AF2122/97), this protein is Putative acyltransferase plsB1 (plsB1).